We begin with the raw amino-acid sequence, 397 residues long: Elongation factor Tu (397 aa).

The tr-type G domain maps to 10–207 (LPHCNVGTIG…TLDSYIPQPE (198 aa)). A G1 region spans residues 19–26 (GHVDHGKT). 19–26 (GHVDHGKT) lines the GTP pocket. Mg(2+) is bound at residue Thr26. Residues 60–64 (GITIN) form a G2 region. The interval 81–84 (DCPG) is G3. GTP is bound by residues 81–85 (DCPGH) and 136–139 (NKAD). Residues 136-139 (NKAD) form a G4 region. Residues 174-176 (SAR) are G5.

This sequence belongs to the TRAFAC class translation factor GTPase superfamily. Classic translation factor GTPase family. EF-Tu/EF-1A subfamily. Monomer.

Its subcellular location is the cytoplasm. It carries out the reaction GTP + H2O = GDP + phosphate + H(+). In terms of biological role, GTP hydrolase that promotes the GTP-dependent binding of aminoacyl-tRNA to the A-site of ribosomes during protein biosynthesis. This Pseudomonas syringae pv. tomato (strain ATCC BAA-871 / DC3000) protein is Elongation factor Tu.